We begin with the raw amino-acid sequence, 21 residues long: Large ribosomal subunit protein uL10 (21 aa).

Belongs to the universal ribosomal protein uL10 family. Part of the ribosomal stalk of the 50S ribosomal subunit. The N-terminus interacts with L11 and the large rRNA to form the base of the stalk. The C-terminus forms an elongated spine to which L12 dimers bind in a sequential fashion forming a multimeric L10(L12)X complex.

In terms of biological role, forms part of the ribosomal stalk, playing a central role in the interaction of the ribosome with GTP-bound translation factors. In Bacillus cereus, this protein is Large ribosomal subunit protein uL10 (rplJ).